The following is a 365-amino-acid chain: Fructose-1,6-bisphosphatase class 1 2 (365 aa).

4 residues coordinate Mg(2+): Glu100, Asp122, Leu124, and Asp125. Substrate-binding positions include 125–128 and Asn221; that span reads DGSS. Residue Glu293 coordinates Mg(2+).

It belongs to the FBPase class 1 family. As to quaternary structure, homotetramer. Mg(2+) is required as a cofactor.

It is found in the cytoplasm. It catalyses the reaction beta-D-fructose 1,6-bisphosphate + H2O = beta-D-fructose 6-phosphate + phosphate. The protein operates within carbohydrate biosynthesis; gluconeogenesis. This Cupriavidus metallidurans (strain ATCC 43123 / DSM 2839 / NBRC 102507 / CH34) (Ralstonia metallidurans) protein is Fructose-1,6-bisphosphatase class 1 2.